The following is a 56-amino-acid chain: Photosystem II reaction center protein K (56 aa).

A propeptide spanning residues methionine 1 to glycine 19 is cleaved from the precursor. Residues methionine 35 to phenylalanine 55 traverse the membrane as a helical segment.

It belongs to the PsbK family. As to quaternary structure, PSII is composed of 1 copy each of membrane proteins PsbA, PsbB, PsbC, PsbD, PsbE, PsbF, PsbH, PsbI, PsbJ, PsbK, PsbL, PsbM, PsbT, PsbX, PsbY, PsbZ, Psb30/Ycf12, at least 3 peripheral proteins of the oxygen-evolving complex and a large number of cofactors. It forms dimeric complexes.

It localises to the plastid. The protein resides in the chloroplast thylakoid membrane. One of the components of the core complex of photosystem II (PSII). PSII is a light-driven water:plastoquinone oxidoreductase that uses light energy to abstract electrons from H(2)O, generating O(2) and a proton gradient subsequently used for ATP formation. It consists of a core antenna complex that captures photons, and an electron transfer chain that converts photonic excitation into a charge separation. The sequence is that of Photosystem II reaction center protein K from Pinus thunbergii (Japanese black pine).